Here is a 586-residue protein sequence, read N- to C-terminus: MDVSGVTGLLRGTALLLVLAAALCSAISSINPDRSGDGRCQAIEIPMCKDIGYNMTRMPNLMGHENQKEAAIQLHEFAPLVEYGCHSHLKFFLCSLYAPMCTEQVSTPIPACRVMCEQARLKCSPIMEQFNFKWPDSLDCSKLPNKNDPNYLCMEAPNNGTDETPRGSSMLPPIFRPQRPSSGHEIYPKDPTSRSSCENSGKFHHVEKSASCAPLCSSSVDVYWSKDDKKFAFIWIAIWSILCFFSSAFTVLTFLVDPLRFKYPERPIIFLSMCYCVYSVGYIIRLFAGADSIACDRDSGQLYVIQEGLESTGCTIVFLILYYFGMASSLWWVILTLTWFLAAGKKWGHEAIEANSSYFHLAAWAIPAVKTIMILVMRRVAGDELTGVCYVGSMDVNALTGFVLIPLACYLIIGTSFILSGFVALFHIRRVMKTGGENTDKLEKLMVRIGVFSVLYTVPATCVIACYFYERLNMDFWKILATQDKCKMDSQTKTLDCTMTSSIPAVEIFMVKIFMLLVVGITSGMWIWTSKTVQSWQNVFSKRLKKRNRSKPASVITSAGIYKKPQHPPKVHHGKYESALQSPTCV.

Positions 1-26 (MDVSGVTGLLRGTALLLVLAAALCSA) are cleaved as a signal peptide. Topologically, residues 27–230 (ISSINPDRSG…DVYWSKDDKK (204 aa)) are extracellular. The FZ domain maps to 35–156 (SGDGRCQAIE…NDPNYLCMEA (122 aa)). 5 disulfide bridges follow: Cys-40–Cys-101, Cys-48–Cys-94, Cys-85–Cys-123, Cys-112–Cys-153, and Cys-116–Cys-140. The N-linked (GlcNAc...) asparagine glycan is linked to Asn-54. A glycan (N-linked (GlcNAc...) asparagine) is linked at Asn-159. The disordered stretch occupies residues 161–199 (TDETPRGSSMLPPIFRPQRPSSGHEIYPKDPTSRSSCEN). A helical membrane pass occupies residues 231–251 (FAFIWIAIWSILCFFSSAFTV). Over 252 to 267 (LTFLVDPLRFKYPERP) the chain is Cytoplasmic. A helical membrane pass occupies residues 268–288 (IIFLSMCYCVYSVGYIIRLFA). Residues 289-315 (GADSIACDRDSGQLYVIQEGLESTGCT) are Extracellular-facing. A helical membrane pass occupies residues 316–336 (IVFLILYYFGMASSLWWVILT). At 337-356 (LTWFLAAGKKWGHEAIEANS) the chain is on the cytoplasmic side. Residues 357–377 (SYFHLAAWAIPAVKTIMILVM) form a helical membrane-spanning segment. Residues 378–401 (RRVAGDELTGVCYVGSMDVNALTG) are Extracellular-facing. Residues 402 to 422 (FVLIPLACYLIIGTSFILSGF) traverse the membrane as a helical segment. Over 423–448 (VALFHIRRVMKTGGENTDKLEKLMVR) the chain is Cytoplasmic. A helical membrane pass occupies residues 449 to 469 (IGVFSVLYTVPATCVIACYFY). Topologically, residues 470 to 507 (ERLNMDFWKILATQDKCKMDSQTKTLDCTMTSSIPAVE) are extracellular. The helical transmembrane segment at 508 to 528 (IFMVKIFMLLVVGITSGMWIW) threads the bilayer. Over 529 to 586 (TSKTVQSWQNVFSKRLKKRNRSKPASVITSAGIYKKPQHPPKVHHGKYESALQSPTCV) the chain is Cytoplasmic. Residues 531–536 (KTVQSW) carry the Lys-Thr-X-X-X-Trp motif, mediates interaction with the PDZ domain of Dvl family members motif. The interval 563–586 (KKPQHPPKVHHGKYESALQSPTCV) is disordered. The span at 564–573 (KPQHPPKVHH) shows a compositional bias: basic residues. Residues 584 to 586 (TCV) carry the PDZ-binding motif.

Belongs to the G-protein coupled receptor Fz/Smo family. Expressed in liver, lung, brain, testis, stomach, kidney, eye, skeletal muscle and skin.

It localises to the cell membrane. Its function is as follows. Receptor for Wnt proteins. Most of frizzled receptors are coupled to the beta-catenin canonical signaling pathway, which leads to the activation of disheveled proteins, inhibition of GSK-3 kinase, nuclear accumulation of beta-catenin and activation of Wnt target genes. A second signaling pathway involving PKC and calcium fluxes has been seen for some family members, but it is not yet clear if it represents a distinct pathway or if it can be integrated in the canonical pathway, as PKC seems to be required for Wnt-mediated inactivation of GSK-3 kinase. Both pathways seem to involve interactions with G-proteins. May be involved in transduction and intercellular transmission of polarity information during tissue morphogenesis and/or in differentiated tissues. Activated by Wnt8. Could have an antagonizing activity in the morphogenesis during development. In Xenopus laevis (African clawed frog), this protein is Frizzled-10-A (fzd10-a).